We begin with the raw amino-acid sequence, 240 residues long: Guanylate kinase (240 aa).

The 181-residue stretch at G56–L236 folds into the Guanylate kinase-like domain. Position 63 to 70 (G63 to S70) interacts with ATP.

Belongs to the guanylate kinase family.

The protein localises to the cytoplasm. The enzyme catalyses GMP + ATP = GDP + ADP. In terms of biological role, essential for recycling GMP and indirectly, cGMP. The sequence is that of Guanylate kinase (gmk) from Mycoplasma genitalium (strain ATCC 33530 / DSM 19775 / NCTC 10195 / G37) (Mycoplasmoides genitalium).